A 780-amino-acid polypeptide reads, in one-letter code: Alpha-xylosidase (780 aa).

Residues Asn-48, Asn-84, Asn-247, and Asn-298 are each glycosylated (N-linked (GlcNAc...) asparagine). Residues Asp-434 and Glu-437 contribute to the active site. Asn-443 carries an N-linked (GlcNAc...) asparagine glycan. The active-site Proton donor is Asp-501. The N-linked (GlcNAc...) asparagine glycan is linked to Asn-718.

Belongs to the glycosyl hydrolase 31 family.

It is found in the secreted. The catalysed reaction is Hydrolysis of terminal, non-reducing alpha-D-xylose residues with release of alpha-D-xylose.. In terms of biological role, catalyzes the liberation of alpha-xylose from the non-reducing terminal glucose of xyloglucan oligosaccharides. The sequence is that of Alpha-xylosidase from Emericella nidulans (strain FGSC A4 / ATCC 38163 / CBS 112.46 / NRRL 194 / M139) (Aspergillus nidulans).